The following is a 458-amino-acid chain: uncharacterized protein (458 aa).

2 disordered regions span residues 339–397 (GTGY…ARIL) and 434–458 (YNSE…EDDC). 2 stretches are compositionally biased toward acidic residues: residues 344–390 (SDSD…EEEP) and 436–458 (SEDE…EDDC).

This is an uncharacterized protein from Invertebrate iridescent virus 3 (IIV-3).